We begin with the raw amino-acid sequence, 132 residues long: L-ectoine synthase (132 aa).

It belongs to the ectoine synthase family.

It carries out the reaction (2S)-4-acetamido-2-aminobutanoate = L-ectoine + H2O. The protein operates within amine and polyamine biosynthesis; ectoine biosynthesis; L-ectoine from L-aspartate 4-semialdehyde: step 3/3. In terms of biological role, catalyzes the circularization of gamma-N-acetyl-alpha,gamma-diaminobutyric acid (ADABA) to ectoine (1,4,5,6-tetrahydro-2-methyl-4-pyrimidine carboxylic acid), which is an excellent osmoprotectant. The polypeptide is L-ectoine synthase (Rhodococcus erythropolis (strain PR4 / NBRC 100887)).